Reading from the N-terminus, the 291-residue chain is Undecaprenyl-diphosphatase (291 aa).

8 consecutive transmembrane segments (helical) span residues 1-21 (MIII…LTEF), 48-68 (SAFT…AWVF), 100-120 (LHVL…DDFI), 124-144 (LFSV…MIIA), 160-180 (INYV…WPGF), 201-221 (SDFT…LSLV), 230-250 (AHIP…LIAI), and 270-290 (IVLV…QGIS).

The protein belongs to the UppP family.

It is found in the cell membrane. It catalyses the reaction di-trans,octa-cis-undecaprenyl diphosphate + H2O = di-trans,octa-cis-undecaprenyl phosphate + phosphate + H(+). Catalyzes the dephosphorylation of undecaprenyl diphosphate (UPP). Confers resistance to bacitracin. In Staphylococcus haemolyticus (strain JCSC1435), this protein is Undecaprenyl-diphosphatase.